We begin with the raw amino-acid sequence, 359 residues long: Peptide chain release factor 1 (359 aa).

At Gln-236 the chain carries N5-methylglutamine.

This sequence belongs to the prokaryotic/mitochondrial release factor family. Post-translationally, methylated by PrmC. Methylation increases the termination efficiency of RF1.

It localises to the cytoplasm. In terms of biological role, peptide chain release factor 1 directs the termination of translation in response to the peptide chain termination codons UAG and UAA. The chain is Peptide chain release factor 1 from Malacoplasma penetrans (strain HF-2) (Mycoplasma penetrans).